A 121-amino-acid polypeptide reads, in one-letter code: Large ribosomal subunit protein bL12 (121 aa).

It belongs to the bacterial ribosomal protein bL12 family. In terms of assembly, homodimer. Part of the ribosomal stalk of the 50S ribosomal subunit. Forms a multimeric L10(L12)X complex, where L10 forms an elongated spine to which 2 to 4 L12 dimers bind in a sequential fashion. Binds GTP-bound translation factors.

Forms part of the ribosomal stalk which helps the ribosome interact with GTP-bound translation factors. Is thus essential for accurate translation. The protein is Large ribosomal subunit protein bL12 of Lactococcus lactis subsp. cremoris (strain MG1363).